Here is a 341-residue protein sequence, read N- to C-terminus: Farnesyl pyrophosphate synthase (341 aa).

Residues Lys48, Arg51, and Gln86 each contribute to the isopentenyl diphosphate site. 2 residues coordinate Mg(2+): Asp93 and Asp97. Arg102 provides a ligand contact to dimethylallyl diphosphate. Residue Arg103 coordinates isopentenyl diphosphate. Residues Lys190, Thr191, Gln229, and Lys246 each contribute to the dimethylallyl diphosphate site.

Belongs to the FPP/GGPP synthase family. Mg(2+) serves as cofactor.

The protein resides in the cytoplasm. The catalysed reaction is isopentenyl diphosphate + dimethylallyl diphosphate = (2E)-geranyl diphosphate + diphosphate. The enzyme catalyses isopentenyl diphosphate + (2E)-geranyl diphosphate = (2E,6E)-farnesyl diphosphate + diphosphate. Its pathway is isoprenoid biosynthesis; farnesyl diphosphate biosynthesis; farnesyl diphosphate from geranyl diphosphate and isopentenyl diphosphate: step 1/1. It participates in isoprenoid biosynthesis; geranyl diphosphate biosynthesis; geranyl diphosphate from dimethylallyl diphosphate and isopentenyl diphosphate: step 1/1. Functionally, catalyzes the sequential condensation of isopentenyl pyrophosphate with the allylic pyrophosphates, dimethylallyl pyrophosphate, and then with the resultant geranylpyrophosphate to the ultimate product farnesyl pyrophosphate. This is Farnesyl pyrophosphate synthase (FPS1) from Helianthus annuus (Common sunflower).